The primary structure comprises 422 residues: Protein IQ-DOMAIN 5 (422 aa).

Positions 23-30 (SKKDENVK) match the Nuclear localization signal motif. 3 consecutive IQ domains span residues 87 to 115 (ENRA…GLVR), 116 to 138 (LQAL…CMQA), and 139 to 164 (LVRV…TSQQ). A calmodulin-binding region spans residues 137–151 (QALVRVQARVRARRV). A disordered region spans residues 269 to 422 (GENGMEQSEN…NSDPIKQRLA (154 aa)). Polar residues predominate over residues 273-308 (MEQSENVPKTQIKSVSKMPNTSNLVSGVSSQMTGPC). Positions 310–327 (SDGDSSSPGISSSIPVVS) are enriched in low complexity. Residues 355 to 371 (NPKERSREPNRSSKERL) are compositionally biased toward basic and acidic residues. The segment covering 373–387 (LPNSGKSLGSQSTKA) has biased composition (polar residues). The span at 412 to 422 (RNSDPIKQRLA) shows a compositional bias: basic and acidic residues.

This sequence belongs to the IQD family. In terms of assembly, binds to multiple calmodulin (CaM) in the presence of Ca(2+) and CaM-like proteins. In terms of tissue distribution, expressed mostly in vegetative tissues including older parts of the root, cotyledons, leaves and shoot apical meristems (SAM). Present at low levels in pollen, siliques and seeds.

It localises to the nucleus. The protein localises to the cytoplasm. Its subcellular location is the cytoskeleton. The protein resides in the spindle. It is found in the phragmoplast. May be involved in cooperative interactions with calmodulins or calmodulin-like proteins. Recruits calmodulin (CaM) calcium sensor proteins to cortical microtubule arrays, thus being a potential scaffold in cellular signaling and trafficking. Binds to microtubules (MTs) and promotes MT assembly and dynamics to modulate pavement cell (PC) morphogenesis via cellulose deposition-dependent anisotropic cell expansion triggered by cellulose synthase complexes (CSCs). May associate with nucleic acids and regulate gene expression at the transcriptional or post-transcriptional level. The chain is Protein IQ-DOMAIN 5 from Arabidopsis thaliana (Mouse-ear cress).